Consider the following 277-residue polypeptide: Thiazole synthase (277 aa).

The active-site Schiff-base intermediate with DXP is the lysine 119. 1-deoxy-D-xylulose 5-phosphate is bound by residues glycine 180, 206 to 207 (AG), and 228 to 229 (NT).

It belongs to the ThiG family. In terms of assembly, homotetramer. Forms heterodimers with either ThiH or ThiS.

The protein localises to the plastid. It is found in the chloroplast. The catalysed reaction is [ThiS sulfur-carrier protein]-C-terminal-Gly-aminoethanethioate + 2-iminoacetate + 1-deoxy-D-xylulose 5-phosphate = [ThiS sulfur-carrier protein]-C-terminal Gly-Gly + 2-[(2R,5Z)-2-carboxy-4-methylthiazol-5(2H)-ylidene]ethyl phosphate + 2 H2O + H(+). It functions in the pathway cofactor biosynthesis; thiamine diphosphate biosynthesis. Its function is as follows. Catalyzes the rearrangement of 1-deoxy-D-xylulose 5-phosphate (DXP) to produce the thiazole phosphate moiety of thiamine. Sulfur is provided by the thiocarboxylate moiety of the carrier protein ThiS. In vitro, sulfur can be provided by H(2)S. This chain is Thiazole synthase, found in Porphyra purpurea (Red seaweed).